The primary structure comprises 174 residues: Secreted protein A (174 aa).

An N-terminal signal peptide occupies residues 1–19 (MRLLITLFAIFALFNCSLA). Asparagine 156 carries an N-linked (GlcNAc...) asparagine glycan.

It belongs to the Sct family. In terms of processing, probably contains disulfide bonds.

It is found in the secreted. The protein resides in the extracellular vesicle. In Dictyostelium discoideum (Social amoeba), this protein is Secreted protein A (p17).